Here is a 436-residue protein sequence, read N- to C-terminus: Adenosylhomocysteinase (436 aa).

Substrate-binding residues include Thr62, Asp136, and Glu161. NAD(+) is bound at residue 162 to 164; sequence TTT. Positions 191 and 195 each coordinate substrate. NAD(+) contacts are provided by residues Asn196, 225 to 230, Glu248, Asn283, 304 to 306, and Asn352; these read GFGDVG and IGH.

The protein belongs to the adenosylhomocysteinase family. The cofactor is NAD(+).

The protein resides in the cytoplasm. The enzyme catalyses S-adenosyl-L-homocysteine + H2O = L-homocysteine + adenosine. It functions in the pathway amino-acid biosynthesis; L-homocysteine biosynthesis; L-homocysteine from S-adenosyl-L-homocysteine: step 1/1. Its function is as follows. May play a key role in the regulation of the intracellular concentration of adenosylhomocysteine. This chain is Adenosylhomocysteinase, found in Leptospira interrogans serogroup Icterohaemorrhagiae serovar copenhageni (strain Fiocruz L1-130).